A 994-amino-acid chain; its full sequence is Translocase of chloroplast 108, chloroplastic (994 aa).

3 disordered regions span residues Lys14 to Pro61, Thr84 to Val124, and Ala152 to Arg287. Composition is skewed to polar residues over residues Gly37–Ser53 and Thr84–Asn98. Residues Ala99–Asp121 show a composition bias toward basic and acidic residues. A compositionally biased stretch (acidic residues) spans Asn166–Met197. The span at Ala249–Ile268 shows a compositional bias: polar residues. Positions Thr269–Ala280 are enriched in low complexity. The 230-residue stretch at Asp360–Arg589 folds into the AIG1-type G domain. A G1 region spans residues Gly369 to Ser376. Gly372 to Ser377 provides a ligand contact to GTP. Position 376 (Ser376) interacts with Mg(2+). Residues Pro395–Lys399 form a G2 region. The tract at residues Asp416 to Gly419 is G3. The interval Thr488 to Ser491 is G4. GTP contacts are provided by residues His489 and Glu537–Asn538. Residues Glu537 to His539 are G5. Disordered regions lie at residues Leu616–Thr659 and Glu691–Asn716. The span at Gln620–Glu643 shows a compositional bias: acidic residues. Over residues Leu650–Thr659 the composition is skewed to basic and acidic residues. Acidic residues predominate over residues Ala705–Ala714. Residues Met969–Gly989 traverse the membrane as a helical segment.

This sequence belongs to the TRAFAC class TrmE-Era-EngA-EngB-Septin-like GTPase superfamily. AIG1/Toc34/Toc159-like paraseptin GTPase family. TOC159 subfamily. In terms of assembly, part of the TOC core complex. Mg(2+) is required as a cofactor.

It localises to the plastid. Its subcellular location is the chloroplast outer membrane. Its function is as follows. GTPase involved in protein precursor import into chloroplasts. Seems to recognize chloroplast-destined precursor proteins and regulate their presentation to the translocation channel through GTP hydrolysis. Probably specialized in the import of nuclear encoded non-photosynthetic preproteins from the cytoplasm to the chloroplast. This Physcomitrium patens (Spreading-leaved earth moss) protein is Translocase of chloroplast 108, chloroplastic.